Consider the following 157-residue polypeptide: Protein-export protein SecB (157 aa).

The protein belongs to the SecB family. Homotetramer, a dimer of dimers. One homotetramer interacts with 1 SecA dimer.

The protein resides in the cytoplasm. One of the proteins required for the normal export of preproteins out of the cell cytoplasm. It is a molecular chaperone that binds to a subset of precursor proteins, maintaining them in a translocation-competent state. It also specifically binds to its receptor SecA. This chain is Protein-export protein SecB, found in Photobacterium profundum (strain SS9).